Reading from the N-terminus, the 132-residue chain is Small ribosomal subunit protein uS8 (132 aa).

This sequence belongs to the universal ribosomal protein uS8 family. In terms of assembly, part of the 30S ribosomal subunit. Contacts proteins S5 and S12.

In terms of biological role, one of the primary rRNA binding proteins, it binds directly to 16S rRNA central domain where it helps coordinate assembly of the platform of the 30S subunit. The polypeptide is Small ribosomal subunit protein uS8 (Brucella ovis (strain ATCC 25840 / 63/290 / NCTC 10512)).